Reading from the N-terminus, the 431-residue chain is Adenylosuccinate synthetase (431 aa).

GTP contacts are provided by residues 13–19 (GDEGKGK) and 41–43 (GHT). The active-site Proton acceptor is Asp-14. The Mg(2+) site is built by Asp-14 and Gly-41. IMP-binding positions include 14-17 (DEGK), 39-42 (NAGH), Thr-130, Arg-144, Gln-225, Thr-240, and Arg-304. The active-site Proton donor is His-42. 300–306 (ATTGRKR) serves as a coordination point for substrate. Residues Arg-306, 332–334 (KLD), and 415–417 (STG) contribute to the GTP site.

It belongs to the adenylosuccinate synthetase family. In terms of assembly, homodimer. Mg(2+) serves as cofactor.

It localises to the cytoplasm. The catalysed reaction is IMP + L-aspartate + GTP = N(6)-(1,2-dicarboxyethyl)-AMP + GDP + phosphate + 2 H(+). Its pathway is purine metabolism; AMP biosynthesis via de novo pathway; AMP from IMP: step 1/2. Plays an important role in the de novo pathway of purine nucleotide biosynthesis. Catalyzes the first committed step in the biosynthesis of AMP from IMP. The chain is Adenylosuccinate synthetase from Shewanella woodyi (strain ATCC 51908 / MS32).